The chain runs to 1147 residues: Tip elongation aberrant protein 1 (1147 aa).

Residues 1–16 (MSFLFKRNKGSAHKPT) show a composition bias toward basic residues. The disordered stretch occupies residues 1–64 (MSFLFKRNKG…TGSGSHITAS (64 aa)). The segment covering 18 to 32 (PNFSKTSTTPSTSQL) has biased composition (polar residues). 6 Kelch repeats span residues 94–144 (EIYI…LIGN), 146–198 (FIVF…CLGS), 199–253 (KICL…TFSD), 254–303 (KLYI…VVEG), 305–351 (LYVF…TLSC), and 355–402 (TLVL…SNST). Disordered stretches follow at residues 384–403 (SVPT…NSTG) and 408–547 (SAFN…NAQS). Composition is skewed to polar residues over residues 385–403 (VPTT…NSTG), 408–465 (SAFN…SNDL), and 472–489 (TRSN…LNSH). Over residues 502-512 (SSLNSQQLSNQ) the composition is skewed to low complexity. Ser503 is subject to Phosphoserine. The segment covering 519–547 (VSPTLSFVPSSHSMEQGNGSVASANNAQS) has biased composition (polar residues). Residues 538–1147 (SVASANNAQS…AKEPVHDNEN (610 aa)) are interaction with tea4. Coiled-coil stretches lie at residues 611-649 (KLYE…LEKV), 716-838 (QTSS…IIDA), 879-990 (KNNE…ALEE), and 1084-1105 (IKSL…AKEK). Residues 948–1147 (KALEQRNTGA…AKEPVHDNEN (200 aa)) form a retention at microtubule cell ends region.

In terms of assembly, major component of the tea1 cell-end complex. Interacts with rax2, tea4 and tip1. Interacts with for3 in the presence of tea4.

It is found in the cytoplasm. It localises to the cytoskeleton. In terms of biological role, cell polarity protein. Acts as an end marker, directing the growth machinery to the cell poles. Involved in the regulation of microtubular organization, affecting the maintenance of a single central axis. Prevents the curling of microtubule tips around the cell ends and is required for the retention of polarity factors such as pom1, tip1 and tea2 at the cell ends, necessary for the cell to grow in a straight line. Links tip1 and tea4 in a common complex. This is Tip elongation aberrant protein 1 (tea1) from Schizosaccharomyces pombe (strain 972 / ATCC 24843) (Fission yeast).